The sequence spans 262 residues: MDGCGTYLDTMRREAPLVQCITNFVAMNVVANVLLAAGASPAMVHDAEESGEFAAIAQALTINMGTPSPRWVEGMEAAARGAAAAGRPWVLDPVAVGATAFRRGLGARLLALKPTVIRGNASEILALAGAETRGKGADSADPVAAAEAAAQRLAESSGAVVAVTGPVDFVTDGRRGIRCANGHPLMPRVTALGCSLTGIVGAFAATRPPFEATAAALAFFGLAGEEAAKTATGPGSFQVAFLDALHTLSPEALDRGARLEAA.

Residue Met-43 participates in substrate binding. The ATP site is built by Arg-118 and Thr-164. Substrate is bound at residue Ala-191.

The protein belongs to the Thz kinase family. It depends on Mg(2+) as a cofactor.

It catalyses the reaction 5-(2-hydroxyethyl)-4-methylthiazole + ATP = 4-methyl-5-(2-phosphooxyethyl)-thiazole + ADP + H(+). It functions in the pathway cofactor biosynthesis; thiamine diphosphate biosynthesis; 4-methyl-5-(2-phosphoethyl)-thiazole from 5-(2-hydroxyethyl)-4-methylthiazole: step 1/1. Its function is as follows. Catalyzes the phosphorylation of the hydroxyl group of 4-methyl-5-beta-hydroxyethylthiazole (THZ). In Cereibacter sphaeroides (strain ATCC 17023 / DSM 158 / JCM 6121 / CCUG 31486 / LMG 2827 / NBRC 12203 / NCIMB 8253 / ATH 2.4.1.) (Rhodobacter sphaeroides), this protein is Hydroxyethylthiazole kinase.